The chain runs to 239 residues: Lipoprotein-releasing system ATP-binding protein LolD (239 aa).

The ABC transporter domain occupies 14 to 239; that stretch reads IRAERLGKTY…KLRELAPSAV (226 aa). Residue 50–57 participates in ATP binding; the sequence is GASGAGKS.

This sequence belongs to the ABC transporter superfamily. Lipoprotein translocase (TC 3.A.1.125) family. The complex is composed of two ATP-binding proteins (LolD) and two transmembrane proteins (LolC and LolE).

The protein resides in the cell inner membrane. In terms of biological role, part of the ABC transporter complex LolCDE involved in the translocation of mature outer membrane-directed lipoproteins, from the inner membrane to the periplasmic chaperone, LolA. Responsible for the formation of the LolA-lipoprotein complex in an ATP-dependent manner. This is Lipoprotein-releasing system ATP-binding protein LolD from Xanthomonas campestris pv. campestris (strain 8004).